The following is a 963-amino-acid chain: MAEGGGYRERPDAETQKSELGALMRTTLQRGAQWYLIDSRWFKQWKKYVGFDSWDMYNVGEHNLYPGPIDNSGLFSDPESQTLKEHLIDELDYVLVPAEAWNKLLNWYGCVEGQQPIVRKVVEHGLFVKHCKVEVYLLELKLCENSDPTNVLSCHFSKADTIATIEKEMRKLFNIPAERETRLWNKYMSNTYEQLSKLDNTVQDAGLYQGQVLVIEPQNEDGTWPRQTQQSKSSTAPSRNFTTSPKSSASPYSSVSASPIANGDSTNTSGMHSSGVSRGGSGFSASYNCQESPLTHVQPGLCGLGNLGNTCFMNSALQCLSNTAPLTDYFLKDEYEAEINRDNPLGMKGEIAEAYAELIKQMWSGRDAHVAPRMFKTQVGRFAPQFSGYQQQDSQELLAFLLDGLHEDLNRVKKKPYLELKDANGRPDAVVAKEAWENHRLRNDSVIVDTFHGLFKSTLVCPECAKVSVTFDPFCYLTLPLPLKKDRVMEIFLVPADPRCRPTQYRVVVPLMGAVSDLCEALSKLSGIAAENMVVTDVYNHRFHKIFQMDEGLNHIMPRDDIFVYEVCSTSPDGSECVTLPVYFRERKSRPSSTSTGAVLYGQPLLVSVPKHKLTLESLYQAVCERISRYIKQPLPDESGSSPLELGACNGSRSGCAGEDEEEMEHQEEGREQLSETEGSGDDEPGSDHGEATQKKNKGRPCPRRLFTFSLVNSYGTADINSLATDGKLLKLNSRSTLAIDWDSETRSCYYNEQESETYEKHVSMLQPQKKKKTAVALRDCIELFTTMETLGEHDPWYCPNCKKHQQATKKFDLWSLPKILVVHLKRFSYNRYWRDKLDTVVEFPVRGLNMSEFVCDPSARPYVYDLIAVSNHYGAMGVGHYTAYAKNKLNGKWYYFDDSNVSLACEDQIVTKAAYVLFYQRRDDEFHKTPSLSFPGSSDGGARPSSSQQGTGDDETYSMDTN.

The DUSP domain maps to 11–122 (PDAETQKSEL…GQQPIVRKVV (112 aa)). The segment at 27 to 216 (TLQRGAQWYL…LYQGQVLVIE (190 aa)) is necessary for interaction with SART3. The Nuclear export signal signature appears at 133–141 (VEVYLLELK). Residues 142 to 226 (LCENSDPTNV…PQNEDGTWPR (85 aa)) enclose the Ubiquitin-like 1 domain. The disordered stretch occupies residues 219–277 (NEDGTWPRQTQQSKSSTAPSRNFTTSPKSSASPYSSVSASPIANGDSTNTSGMHSSGVS). The segment covering 225–243 (PRQTQQSKSSTAPSRNFTT) has biased composition (polar residues). The tract at residues 229-295 (QQSKSSTAPS…SYNCQESPLT (67 aa)) is required for USP4 activation by providing conformational flexibility between the DUSP and catalytic domains. Over residues 244-261 (SPKSSASPYSSVSASPIA) the composition is skewed to low complexity. Residues 302 to 923 (CGLGNLGNTC…AAYVLFYQRR (622 aa)) form the USP domain. C311 functions as the Nucleophile in the catalytic mechanism. Positions 384-386 (PQF) are regulates ubiquitin dissociation. The interval 405–407 (LHE) is necessary for interaction with RBL2. At S445 the chain carries Phosphoserine. Residues 459–463 (LVCPE) are necessary for interaction with RB1 and RBL2. Positions 461 and 464 each coordinate Zn(2+). Positions 483-571 (LKKDRVMEIF…IFVYEVCSTS (89 aa)) constitute a Ubiquitin-like 2 domain. Positions 485–775 (KDRVMEIFLV…LQPQKKKKTA (291 aa)) are interacts with DUSP and ubiquitin-like 1 domains and is required for USP4 activation. The tract at residues 634 to 701 (PLPDESGSSP…ATQKKNKGRP (68 aa)) is disordered. A phosphoserine mark is found at S675 and S680. Residues 767 to 772 (QPQKKK) carry the Nuclear localization signal motif. Positions 799 and 802 each coordinate Zn(2+). The active-site Proton acceptor is H881. The disordered stretch occupies residues 930-963 (TPSLSFPGSSDGGARPSSSQQGTGDDETYSMDTN). Positions 953–963 (GDDETYSMDTN) are enriched in acidic residues.

It belongs to the peptidase C19 family. USP4 subfamily. Interacts with RB1 (both dephosphorylated and hypophosphorylated forms). Interacts with RBL1 and RBL2. Interacts with ADORA2A (via cytoplasmic C-terminus); the interaction is direct. Interacts with SART3; recruits USP4 to its substrate PRPF3. Phosphorylated at Ser-445 by PKB/AKT1 in response to EGF stimulus, promoting its ability deubiquitinate RHEB. Post-translationally, monoubiquitinated by TRIM21. Ubiquitination does not lead to its proteasomal degradation. Autodeubiquitinated.

Its subcellular location is the cytoplasm. It is found in the nucleus. The catalysed reaction is Thiol-dependent hydrolysis of ester, thioester, amide, peptide and isopeptide bonds formed by the C-terminal Gly of ubiquitin (a 76-residue protein attached to proteins as an intracellular targeting signal).. Its activity is regulated as follows. The completion of the deubiquitinase reaction is mediated by the DUSP and ubiquitin-like 1 domains which promotes the release of ubiquitin from the catalytic site enabling subsequent reactions to occur. Functionally, deubiquitinating enzyme that removes conjugated ubiquitin from target proteins. Deubiquitinates PDPK1. Deubiquitinates TRIM21. Deubiquitinates receptor ADORA2A which increases the amount of functional receptor at the cell surface. Deubiquitinates HAS2. Deubiquitinates RHEB in response to EGF signaling, promoting mTORC1 signaling. May regulate mRNA splicing through deubiquitination of the U4 spliceosomal protein PRPF3. This may prevent its recognition by the U5 component PRPF8 thereby destabilizing interactions within the U4/U6.U5 snRNP. May also play a role in the regulation of quality control in the ER. In Bos taurus (Bovine), this protein is Ubiquitin carboxyl-terminal hydrolase 4 (USP4).